The sequence spans 82 residues: MVFLLCFFLVADVSYGINKDCLLPMDVGRCRARHPRYYYNSSSKRCEKFIYGGCRGNANNFITKKECEKVCGVRSRDSPKEN.

Positions 1–16 are cleaved as a signal peptide; the sequence is MVFLLCFFLVADVSYG. One can recognise a BPTI/Kunitz inhibitor domain in the interval 21 to 71; sequence CLLPMDVGRCRARHPRYYYNSSSKRCEKFIYGGCRGNANNFITKKECEKVC. Cystine bridges form between Cys-21/Cys-71, Cys-30/Cys-54, and Cys-46/Cys-67. Residues 76-82 constitute a propeptide that is removed on maturation; sequence RDSPKEN.

Belongs to the venom Kunitz-type family. Sea anemone type 2 potassium channel toxin subfamily.

Its subcellular location is the secreted. It is found in the nematocyst. Its function is as follows. Dual-function toxin that inhibits both the serine protease trypsin and voltage-gated potassium channels Kv1.2/KCNA2. The sequence is that of U-actitoxin-Avd3k from Anemonia viridis (Snakelocks anemone).